Here is a 334-residue protein sequence, read N- to C-terminus: Phosphate acyltransferase (334 aa).

This sequence belongs to the PlsX family. As to quaternary structure, homodimer. Probably interacts with PlsY.

It is found in the cytoplasm. The enzyme catalyses a fatty acyl-[ACP] + phosphate = an acyl phosphate + holo-[ACP]. It functions in the pathway lipid metabolism; phospholipid metabolism. In terms of biological role, catalyzes the reversible formation of acyl-phosphate (acyl-PO(4)) from acyl-[acyl-carrier-protein] (acyl-ACP). This enzyme utilizes acyl-ACP as fatty acyl donor, but not acyl-CoA. The protein is Phosphate acyltransferase of Fervidobacterium nodosum (strain ATCC 35602 / DSM 5306 / Rt17-B1).